The sequence spans 608 residues: ATP-binding protein Uup (608 aa).

ABC transporter domains lie at 7-217 and 285-512; these read APVL…AADA and VEAK…FAPV. Residues 42-49 and 317-324 each bind ATP; these read GRNGAGKS and GPNGAGKT. The tract at residues 522–608 is C-terminal domain (CTD), binds DNA; that stretch reads AAPAAPKKSA…LEEKKENLAG (87 aa).

It belongs to the ABC transporter superfamily. ABCF family. Uup subfamily.

Its subcellular location is the cytoplasm. It carries out the reaction ATP + H2O = ADP + phosphate + H(+). Probably plays a role in ribosome assembly or function. May be involved in resolution of branched DNA intermediates that result from template switching in postreplication gaps. Binds DNA and has ATPase activity. Its function is as follows. One of a cluster of genes involved in attachment of the holdfast to the cell. The holdfast is a structure that allows the bacteria to firmly adhere to surfaces. The protein is ATP-binding protein Uup of Caulobacter vibrioides (strain ATCC 19089 / CIP 103742 / CB 15) (Caulobacter crescentus).